Here is a 222-residue protein sequence, read N- to C-terminus: Large ribosomal subunit protein uL1 (222 aa).

Belongs to the universal ribosomal protein uL1 family. Part of the 50S ribosomal subunit.

Binds directly to 23S rRNA. Probably involved in E site tRNA release. In terms of biological role, protein L1 is also a translational repressor protein, it controls the translation of its operon by binding to its mRNA. The protein is Large ribosomal subunit protein uL1 of Pyrobaculum arsenaticum (strain DSM 13514 / JCM 11321 / PZ6).